A 121-amino-acid polypeptide reads, in one-letter code: Large ribosomal subunit protein bL19 (121 aa).

This sequence belongs to the bacterial ribosomal protein bL19 family.

Functionally, this protein is located at the 30S-50S ribosomal subunit interface and may play a role in the structure and function of the aminoacyl-tRNA binding site. The sequence is that of Large ribosomal subunit protein bL19 from Mesomycoplasma hyopneumoniae (strain 232) (Mycoplasma hyopneumoniae).